A 288-amino-acid polypeptide reads, in one-letter code: ATP synthase gamma chain (288 aa).

This sequence belongs to the ATPase gamma chain family. F-type ATPases have 2 components, CF(1) - the catalytic core - and CF(0) - the membrane proton channel. CF(1) has five subunits: alpha(3), beta(3), gamma(1), delta(1), epsilon(1). CF(0) has three main subunits: a, b and c.

It localises to the cell inner membrane. Its function is as follows. Produces ATP from ADP in the presence of a proton gradient across the membrane. The gamma chain is believed to be important in regulating ATPase activity and the flow of protons through the CF(0) complex. The polypeptide is ATP synthase gamma chain (Rickettsia akari (strain Hartford)).